Here is a 234-residue protein sequence, read N- to C-terminus: MSNKIIVALDYETEKEALQLVDQIDPSLCRLKVGKEMFTTLGTNFVKLLQDRDFDVFLDLKFHDIPNTVARAVRSAADLGVWMVDLHASGGLRMMEEAKKILEPYGKDAPILISVTVLTSMEDLDLLQIGINASPMEQVIRLAHLSQRAGLDGVVCSPQEVEILRQHLGKEFKLITPGIRPVGSEFGDQRRVMTPPAAIEAGSDYLVIGRPITQAANPAEVLRSINASIANLIA.

Residues Asp10, Lys32, 59-68 (DLKFHDIPNT), Thr119, Arg180, Gln189, Gly209, and Arg210 contribute to the substrate site. The Proton donor role is filled by Lys61.

The protein belongs to the OMP decarboxylase family. Type 1 subfamily. In terms of assembly, homodimer.

The enzyme catalyses orotidine 5'-phosphate + H(+) = UMP + CO2. The protein operates within pyrimidine metabolism; UMP biosynthesis via de novo pathway; UMP from orotate: step 2/2. Catalyzes the decarboxylation of orotidine 5'-monophosphate (OMP) to uridine 5'-monophosphate (UMP). The sequence is that of Orotidine 5'-phosphate decarboxylase from Mannheimia succiniciproducens (strain KCTC 0769BP / MBEL55E).